The sequence spans 171 residues: Mitochondrial import inner membrane translocase subunit Tim17-A (171 aa).

Cysteine 9 and cysteine 78 are disulfide-bonded. 3 consecutive transmembrane segments (helical) span residues 17-37 (CGGAFTMGTIGGGIFQAIKGF), 63-77 (GGSFAVWGGLFSMID), and 113-133 (VGSAAMGGILLALIEGAGILL). The interval 144–171 (GPQFAEDPSQLPSTQLPSSPFGDYRQYQ) is disordered. Low complexity predominate over residues 151-163 (PSQLPSTQLPSSP).

This sequence belongs to the Tim17/Tim22/Tim23 family. Component of the TIM23 complex at least composed of TIMM23, TIMM17 (TIMM17A or TIMM17B) and TIMM50. The complex interacts with the TIMM44 component of the PAM complex and with DNAJC15. Post-translationally, degraded by YMEL1 downstream of the integrated stress response (ISR).

It localises to the mitochondrion inner membrane. In terms of biological role, essential component of the TIM23 complex, a complex that mediates the translocation of transit peptide-containing proteins across the mitochondrial inner membrane. The polypeptide is Mitochondrial import inner membrane translocase subunit Tim17-A (TIMM17A) (Homo sapiens (Human)).